The sequence spans 479 residues: Lysosomal protective protein (479 aa).

The first 27 residues, Met1–Gly27, serve as a signal peptide directing secretion. Intrachain disulfides connect Cys87/Cys361, Cys239/Cys255, Cys240/Cys245, and Cys280/Cys330. Asn144 is a glycosylation site (N-linked (GlcNAc...) asparagine). Residue Ser177 is part of the active site. Asn332 carries N-linked (GlcNAc...) asparagine glycosylation. Active-site residues include Asp399 and His456.

The protein belongs to the peptidase S10 family. As to quaternary structure, heterodimer of a 32 kDa chain and a 20 kDa chain; disulfide-linked.

It localises to the lysosome. It carries out the reaction Release of a C-terminal amino acid with broad specificity.. In terms of biological role, protective protein appears to be essential for both the activity of beta-galactosidase and neuraminidase, it associates with these enzymes and exerts a protective function necessary for their stability and activity. This protein is also a carboxypeptidase and can deamidate tachykinins. This is Lysosomal protective protein (CTSA) from Bos taurus (Bovine).